The chain runs to 543 residues: Chaperonin GroEL (543 aa).

ATP is bound by residues 29 to 32, 86 to 90, Gly-413, 478 to 480, and Asp-494; these read TLGP, DGTTT, and DAL. The tract at residues 524-543 is disordered; it reads PEPEAPAVPAGMPGGMGGMY.

The protein belongs to the chaperonin (HSP60) family. As to quaternary structure, forms a cylinder of 14 subunits composed of two heptameric rings stacked back-to-back. Interacts with the co-chaperonin GroES.

It localises to the cytoplasm. The enzyme catalyses ATP + H2O + a folded polypeptide = ADP + phosphate + an unfolded polypeptide.. Functionally, together with its co-chaperonin GroES, plays an essential role in assisting protein folding. The GroEL-GroES system forms a nano-cage that allows encapsulation of the non-native substrate proteins and provides a physical environment optimized to promote and accelerate protein folding. In Ruminiclostridium cellulolyticum (strain ATCC 35319 / DSM 5812 / JCM 6584 / H10) (Clostridium cellulolyticum), this protein is Chaperonin GroEL.